The primary structure comprises 22 residues: Motilin (22 aa).

The interval 1–22 is disordered; the sequence is FVPIFTHSELQKIREKERNKGQ. Positions 9–22 are enriched in basic and acidic residues; it reads ELQKIREKERNKGQ.

The protein belongs to the motilin family.

Its subcellular location is the secreted. Functionally, plays an important role in the regulation of interdigestive gastrointestinal motility and indirectly causes rhythmic contraction of duodenal and colonic smooth muscle. The protein is Motilin (MLN) of Canis lupus familiaris (Dog).